The primary structure comprises 157 residues: Succinate dehydrogenase [ubiquinone] cytochrome b small subunit, mitochondrial (157 aa).

Residues Met1–Gln45 constitute a mitochondrion transit peptide. Residues Ser46–Ser61 lie on the Mitochondrial matrix side of the membrane. A helical membrane pass occupies residues Leu62–Leu83. Topologically, residues Tyr84–Ala88 are mitochondrial intermembrane. A helical membrane pass occupies residues Val89 to Ile109. His100 contributes to the heme b binding site. Topologically, residues Thr110–Pro118 are mitochondrial matrix. Tyr112 lines the a ubiquinone pocket. A helical membrane pass occupies residues Ile119–Phe140. The Mitochondrial intermembrane portion of the chain corresponds to Asn141–Ile157.

This sequence belongs to the CybS family. Component of complex II composed of four subunits: the flavoprotein (FP) SDHA, iron-sulfur protein (IP) SDHB, and a cytochrome b560 composed of SDHC and SDHD.

The protein localises to the mitochondrion inner membrane. It functions in the pathway carbohydrate metabolism; tricarboxylic acid cycle. Membrane-anchoring subunit of succinate dehydrogenase (SDH) that is involved in complex II of the mitochondrial electron transport chain and is responsible for transferring electrons from succinate to ubiquinone (coenzyme Q). SDH also oxidizes malate to the non-canonical enol form of oxaloacetate, enol-oxaloacetate. Enol-oxaloacetate, which is a potent inhibitor of the succinate dehydrogenase activity, is further isomerized into keto-oxaloacetate. This is Succinate dehydrogenase [ubiquinone] cytochrome b small subunit, mitochondrial (SDHD) from Gallus gallus (Chicken).